An 860-amino-acid polypeptide reads, in one-letter code: MATYTPMIQQYLDIKAQYPDAFLFFRLGDFYEMFFDDAIKAAQELEITLTSRDGGGEERVPMCGVPYHSAQGYIEQLISKGYKVAICEQVEDPKTAKGVVRREVVQLITPGTVMEGKGLLDKENNYLATVTMFDDGTYGFAYTDLSTGENRITLLASLDDVMNELYAIGTKEIVISSQFPEQYQQLLKERYDVTISYEDETVIPEGFTSIVEALQQDKLKITFGRLLHYIIRTQKRRLDHMQSVQVYQVDHYMKIDLYSKRNLELTETIRSKGRKGSLLWLLDETVTAMGGRLLKQWLDRPLLDRKQIERRLHMVETLIHHYFERQELRERLREVYDVERLAGRVAYGNVNARDLIQLKKSLQQIPALKDIVEKLPDHEAKQLANKLDPCSELVDLLERSIQENPPLSVKEGNIIKDGYNETLDRYRDASRNGKAWIAQLESKERELTGIKSLKIGYNRVFGYYIEVTKPNLHLLPKGRYERKQTLANAERFITQELKEKEALILEAEEKSIELEYELFVDIRERVKQYIPRLQSLAKTISELDVLQSFATVSEERHYVKPQFSDNRELIIQAGRHPVVEKVLGAQTYVPNDCYMNKERELLLITGPNMSGKSTYMRQIALTVIMAQIGCFVPAEKAVLPIFDQVFTRIGAADDLVSGQSTFMVEMLEARNAIVHATQNSLILFDEIGRGTSTYDGMALAQAIIEYIHDHIGAKTLFSTHYHELTDLEQSLAKLKNVHVRAVEENGKVVFLHKIEEGPADQSYGIHVAELAELPASLIQRAKEILAELEQQEQRKEQPSGKNEAVFEQLSMFAEEQPSKEESHLSKKEKKALEALKSVNLLETTPLEALNKLYEIQKLLK.

606-613 serves as a coordination point for ATP; the sequence is GPNMSGKS.

It belongs to the DNA mismatch repair MutS family.

In terms of biological role, this protein is involved in the repair of mismatches in DNA. It is possible that it carries out the mismatch recognition step. This protein has a weak ATPase activity. This chain is DNA mismatch repair protein MutS, found in Geobacillus sp. (strain WCH70).